The primary structure comprises 188 residues: Peptidyl-tRNA hydrolase (188 aa).

Tyrosine 15 provides a ligand contact to tRNA. Histidine 20 functions as the Proton acceptor in the catalytic mechanism. Tyrosine 64, asparagine 66, and asparagine 112 together coordinate tRNA.

This sequence belongs to the PTH family. In terms of assembly, monomer.

The protein resides in the cytoplasm. The enzyme catalyses an N-acyl-L-alpha-aminoacyl-tRNA + H2O = an N-acyl-L-amino acid + a tRNA + H(+). Functionally, hydrolyzes ribosome-free peptidyl-tRNAs (with 1 or more amino acids incorporated), which drop off the ribosome during protein synthesis, or as a result of ribosome stalling. In terms of biological role, catalyzes the release of premature peptidyl moieties from peptidyl-tRNA molecules trapped in stalled 50S ribosomal subunits, and thus maintains levels of free tRNAs and 50S ribosomes. The chain is Peptidyl-tRNA hydrolase from Cytophaga hutchinsonii (strain ATCC 33406 / DSM 1761 / CIP 103989 / NBRC 15051 / NCIMB 9469 / D465).